Here is a 447-residue protein sequence, read N- to C-terminus: MIKIKKGLDLPIAGAPVQTIQDGPAIHHVALLGEEYVGMRPSMLVQEGDQVKKGQALFEDKKNPGVLFTAPASGKISAINRGERRVLQSVVIEVEGDEQIPFEHYAAEELNQLSDEQVQHHLLTSGLWTALRTRPFSKTPVPGSRPRAIFISAMDTQPLAADPQVIIATESEAFNHGLTVLTRLTDGKVHVCHAAGQAVTRHTNTQVTYNEFSGPHPAGLVGTHIHFLEPVSQTKMVWHVGYQDVIAIGKLFTRGELCTDRIVALAGPQVNQPILLRTRLGASLSELTAGKLKEGDNRIISGSVLSGTAFSATHGYLGRFHQQVSVIREGREKELFGWVMPGRDKYSITRTTLGYFFKRKLFAFSTDMHGGERAMVPIGNYERVMPLDILATHLLRDLLAGDTDSAQALGCLELDEEDLALCTFVCPGKYEYGPVLRDILTQIEQEG.

The protein belongs to the NqrA family. As to quaternary structure, composed of six subunits; NqrA, NqrB, NqrC, NqrD, NqrE and NqrF.

It carries out the reaction a ubiquinone + n Na(+)(in) + NADH + H(+) = a ubiquinol + n Na(+)(out) + NAD(+). In terms of biological role, NQR complex catalyzes the reduction of ubiquinone-1 to ubiquinol by two successive reactions, coupled with the transport of Na(+) ions from the cytoplasm to the periplasm. NqrA to NqrE are probably involved in the second step, the conversion of ubisemiquinone to ubiquinol. This is Na(+)-translocating NADH-quinone reductase subunit A from Yersinia pestis bv. Antiqua (strain Angola).